The following is a 589-amino-acid chain: Putative sphingomyelin phosphodiesterase asm-3 (589 aa).

An N-terminal signal peptide occupies residues 1 to 17 (MLLGLLVLSLAFQGTLA). The Saposin B-type domain maps to 18–101 (VTECEECKSI…LMKNDCGDFV (84 aa)). Cystine bridges form between C21/C97, C24/C89, and C52/C63. An N-linked (GlcNAc...) asparagine glycan is attached at N109. D139 and H141 together coordinate Zn(2+). Cystine bridges form between C154–C159 and C160–C188. Zn(2+) is bound at residue D217. N-linked (GlcNAc...) asparagine glycosylation occurs at N237. N257 is a Zn(2+) binding site. N334 carries an N-linked (GlcNAc...) asparagine glycan. H364, H398, and H400 together coordinate Zn(2+). A glycan (N-linked (GlcNAc...) asparagine) is linked at N463. 2 disulfides stabilise this stretch: C530–C535 and C541–C553. A disordered region spans residues 562–589 (KPEPKKNKYSARFATSNERRRGKEECKI). Over residues 578-589 (NERRRGKEECKI) the composition is skewed to basic and acidic residues.

Belongs to the acid sphingomyelinase family. Zn(2+) is required as a cofactor.

The protein resides in the secreted. It carries out the reaction an N-(acyl)-sphingosylphosphocholine + H2O = an N-acyl-sphingoid base + phosphocholine + H(+). The catalysed reaction is a sphingomyelin + H2O = phosphocholine + an N-acylsphing-4-enine + H(+). It catalyses the reaction an N-acyl-15-methylhexadecasphing-4-enine-1-phosphocholine + H2O = an N-acyl-15-methylhexadecasphing-4-enine + phosphocholine + H(+). It participates in lipid metabolism; sphingolipid metabolism. Its function is as follows. Converts sphingomyelin to ceramide (N-acyl-sphingoid base) and phosphocholine. C.elegans contain specific sphingoid bases, which are unique or different in structure compared to the sphingoid bases found in other animals. Two examples of these distinctive compounds are: 15-methylhexadecasphinganine and 15-methylhexadecasphing-4-enine. This is Putative sphingomyelin phosphodiesterase asm-3 (asm-3) from Caenorhabditis elegans.